Here is a 322-residue protein sequence, read N- to C-terminus: Sideroflexin-1 (322 aa).

S2 is modified (N-acetylserine). Residues 2-102 (SGELPPNINI…MSAQVPMNMT (101 aa)) are Mitochondrial matrix-facing. A helical membrane pass occupies residues 103 to 120 (ITGCMMTFYRTTPAVLFW). At 121-146 (QWINQSFNAVVNYTNRSGDAPLTVNE) the chain is on the mitochondrial intermembrane side. Residues 147–167 (LGTAYVSATTGAVATALGLNA) traverse the membrane as a helical segment. Over 168–174 (LTKHVSP) the chain is Mitochondrial matrix. The chain crosses the membrane as a helical span at residues 175-195 (LIGRFVPFAAVAAANCINIPL). Residues 196–228 (MRQRELKVGIPVTDENGNRLGESANAAKQAITQ) are Mitochondrial intermembrane-facing. The chain crosses the membrane as a helical span at residues 229–249 (VVVSRILMAAPGMAIPPFIMN). Residues 250–266 (TLEKKAFLKRFPWMSAP) lie on the Mitochondrial matrix side of the membrane. Residues 267–287 (IQVGLVGFCLVFATPLCCALF) form a helical membrane-spanning segment. Residues 288-322 (PQKSSMSVTSLEAELQAKIQESHPELRRVYFNKGL) lie on the Mitochondrial intermembrane side of the membrane.

The protein belongs to the sideroflexin family. Highly expressed in tissues with high one-carbon metabolism activity, such as blood, liver and kidney.

The protein localises to the mitochondrion inner membrane. The enzyme catalyses L-serine(in) = L-serine(out). The catalysed reaction is L-alanine(in) = L-alanine(out). It carries out the reaction L-cysteine(in) = L-cysteine(out). Functionally, amino acid transporter importing serine, an essential substrate of the mitochondrial branch of the one-carbon pathway, into mitochondria. Mitochondrial serine is then converted to glycine and formate, which exits to the cytosol where it is used to generate the charged folates that serve as one-carbon donors. May also transport other amino acids including alanine and cysteine. In Homo sapiens (Human), this protein is Sideroflexin-1.